A 1381-amino-acid chain; its full sequence is Regulator of G-protein signaling 12 (1381 aa).

The region spanning 21–98 is the PDZ domain; sequence SVEVARGRAG…VLHMVIAEGT (78 aa). A phosphoserine mark is found at Ser171 and Ser194. Lys195 is covalently cross-linked (Glycyl lysine isopeptide (Lys-Gly) (interchain with G-Cter in SUMO2)). Residues 223–390 enclose the PID domain; sequence SILNVAMVVG…VLQFISVLYR (168 aa). Disordered stretches follow at residues 409–428, 442–528, and 620–644; these read ADAHQNNSTSSNSDSGIGNF, LGGG…GAAG, and RKTKEDKKSSKLGRGVALAQTSQRT. The span at 412–428 shows a compositional bias: polar residues; sequence HQNNSTSSNSDSGIGNF. Arg524 and Arg633 each carry omega-N-methylarginine. Phosphoserine occurs at positions 661 and 671. Positions 715-832 constitute an RGS domain; sequence SFERLLQDPV…LKSQLYQECV (118 aa). Residues 842–942 form a disordered region; sequence PDSQQVPSSP…ESQGSVSSAG (101 aa). Residues 849–869 show a composition bias toward low complexity; that stretch reads SSPASKHSISSDHSNVSTPKK. Residues Ser850 and Ser879 each carry the phosphoserine modification. Basic and acidic residues predominate over residues 914 to 923; that stretch reads DHGDHAHDAP. The residue at position 943 (Ser943) is a Phosphoserine. RBD domains are found at residues 962-1032 and 1034-1104; these read KHCC…LEKR and LFRL…LEER. Over residues 1102-1117 the composition is skewed to basic and acidic residues; sequence EERDPSRGKVSTDKQK. A disordered region spans residues 1102-1169; that stretch reads EERDPSRGKV…RDPRLSKREE (68 aa). Polar residues predominate over residues 1122-1132; sequence KQNSAVNSSPR. The span at 1151–1169 shows a compositional bias: basic and acidic residues; that stretch reads IRGENGKSARDPRLSKREE. The 23-residue stretch at 1187–1209 folds into the GoLoco domain; the sequence is AEEFFELISKAQSNRADDQRGLL. Disordered regions lie at residues 1227 to 1318 and 1347 to 1381; these read SELA…QEGT and LMGEGDISSPNSTLLPPPPTPQDTPGPPRPGTSRF. The span at 1261-1280 shows a compositional bias: low complexity; it reads SDSPATSPASAQSPCSAYSP. The span at 1361–1381 shows a compositional bias: pro residues; it reads LPPPPTPQDTPGPPRPGTSRF.

In terms of assembly, interacts with GNAI1, GNAI2 and GNAI3; the interactions are GDP-dependent. In terms of tissue distribution, expressed in brain.

The protein resides in the nucleus. It localises to the cytoplasm. It is found in the cell projection. Its subcellular location is the dendrite. The protein localises to the synapse. In terms of biological role, regulates G protein-coupled receptor signaling cascades. Inhibits signal transduction by increasing the GTPase activity of G protein alpha subunits, thereby driving them into their inactive GDP-bound form. The sequence is that of Regulator of G-protein signaling 12 (Rgs12) from Mus musculus (Mouse).